Reading from the N-terminus, the 222-residue chain is Beta-casein (222 aa).

The first 15 residues, 1 to 15, serve as a signal peptide directing secretion; that stretch reads MKVLILACLVALAIA. Residue T27 is modified to Phosphothreonine. A phosphoserine mark is found at S30, S32, S33, and S34.

It belongs to the beta-casein family. In terms of tissue distribution, mammary gland specific. Secreted in milk.

It localises to the secreted. Its function is as follows. Important role in determination of the surface properties of the casein micelles. The protein is Beta-casein (CSN2) of Capra hircus (Goat).